The following is a 493-amino-acid chain: Transcript termination protein A18 (493 aa).

The Helicase ATP-binding domain occupies 100–256 (MIESKRPLYI…NSIINIAKLS (157 aa)). Position 113 to 120 (113 to 120 (LACGFGKT)) interacts with ATP. A DESH box motif is present at residues 206–209 (DESH).

This sequence belongs to the helicase family. Poxviruses subfamily. As to quaternary structure, interacts with G2. Might be part of a transcription complex composed at least of G2, A18, and H5.

It localises to the virion. In terms of biological role, DNA helicase which seems to act as a postreplicative transcription termination factor. Involved in ATP-dependent release of nascent RNA. Forms a stable complex with single-stranded DNA, and to a lesser extent RNA. The chain is Transcript termination protein A18 from Vaccinia virus (strain Tian Tan) (VACV).